A 393-amino-acid polypeptide reads, in one-letter code: Phosphoglycerate kinase (393 aa).

Residues 21-23 (DLN), Arg36, 59-62 (HLGR), Arg113, and Arg146 each bind substrate. ATP is bound by residues Lys197, Glu319, and 345–348 (GGDT).

Belongs to the phosphoglycerate kinase family. Monomer.

It is found in the cytoplasm. The enzyme catalyses (2R)-3-phosphoglycerate + ATP = (2R)-3-phospho-glyceroyl phosphate + ADP. It participates in carbohydrate degradation; glycolysis; pyruvate from D-glyceraldehyde 3-phosphate: step 2/5. This Nitratidesulfovibrio vulgaris (strain DSM 19637 / Miyazaki F) (Desulfovibrio vulgaris) protein is Phosphoglycerate kinase.